Here is a 139-residue protein sequence, read N- to C-terminus: Large ribosomal subunit protein uL13 (139 aa).

This sequence belongs to the universal ribosomal protein uL13 family. Part of the 50S ribosomal subunit.

In terms of biological role, this protein is one of the early assembly proteins of the 50S ribosomal subunit, although it is not seen to bind rRNA by itself. It is important during the early stages of 50S assembly. The chain is Large ribosomal subunit protein uL13 from Aliarcobacter butzleri (strain RM4018) (Arcobacter butzleri).